The following is a 761-amino-acid chain: Zinc finger protein 287 (761 aa).

One can recognise an SCAN box domain in the interval 49–131 (RQNFRNFPYP…TLVEDLTQIL (83 aa)). The interval 134 to 154 (EAPQNSTLSQDTPEEDPRGKH) is disordered. The KRAB domain maps to 170-238 (MTFKDVAVDI…IKEILEGPSP (69 aa)). C2H2-type zinc fingers lie at residues 368–390 (YKCN…QSTH), 396–418 (YECE…QRMH), 424–446 (YECH…QRIH), 452–474 (YKCD…QRTH), 480–502 (YKCL…QRVH), 508–530 (YICN…QKIH), 536–558 (YKCN…QRIH), 564–586 (YKCN…QTTH), 592–614 (YICN…HRTH), 620–642 (YKCS…QRIH), 648–670 (FKCN…QRIH), 676–698 (YKCN…QRTH), 704–726 (YKCN…QRIH), and 732–754 (YACR…QRVH).

The protein belongs to the krueppel C2H2-type zinc-finger protein family.

The protein localises to the nucleus. Functionally, may be involved in transcriptional regulation. The polypeptide is Zinc finger protein 287 (Pongo pygmaeus (Bornean orangutan)).